Reading from the N-terminus, the 241-residue chain is MATVSMRDMLKAGVHFGHQTRYWNPKMKPFIFGARNKVHIINLEKTVPMFNEALAELNKIAARKGKILFVGTKRAASEAVKDAALSCDQFFVNHRWLGGMLTNWKTVRQSIKRLKDLETQSQDGTFDKLTKKEALMRTRELDKLENSLGGIKDMGGLPDALFVIDADHEHIAIKEANNLGIPVFAIVDTNSDPDGVDFVIPGNDDAIRAVSLYLGAVAATVREGRSQDLASQAEESFVEAE.

This sequence belongs to the universal ribosomal protein uS2 family.

This Klebsiella pneumoniae subsp. pneumoniae (strain ATCC 700721 / MGH 78578) protein is Small ribosomal subunit protein uS2.